The following is a 338-amino-acid chain: MSVSGLPFDDFRTLLRDLPGPDARALVAARERDAQLTKPPGALGRLEEIAFWLAAWTGRTPAVNRPLVAIFAGNHGVTKQGITPFPPTVTQQMVENFAAGGAAINQICVAYDLGLKVFDLALDYPTGDITEEAALSERDCAATMAFGMEAIAGGTDLLCIGEMGIGNTTIAAAINYALYGGSARDWVGPGTGSEGEMLERKIAAVEKAVALHGDHLDDPLEIMRRLGGREIAAMAGAILAARMERIPVLIDGYVATAAAAILKAANPSALDHCLIGHVSGEPGHLRAIEMLGKTPLLALGMRLGEGTGAALAAGIVKAAAACHSGMATFAQAGVSNKH.

The active-site Proton acceptor is the Glu-305.

Belongs to the CobT family.

The enzyme catalyses 5,6-dimethylbenzimidazole + nicotinate beta-D-ribonucleotide = alpha-ribazole 5'-phosphate + nicotinate + H(+). It participates in nucleoside biosynthesis; alpha-ribazole biosynthesis; alpha-ribazole from 5,6-dimethylbenzimidazole: step 1/2. Catalyzes the synthesis of alpha-ribazole-5'-phosphate from nicotinate mononucleotide (NAMN) and 5,6-dimethylbenzimidazole (DMB). This chain is Nicotinate-nucleotide--dimethylbenzimidazole phosphoribosyltransferase, found in Rhizobium johnstonii (strain DSM 114642 / LMG 32736 / 3841) (Rhizobium leguminosarum bv. viciae).